The sequence spans 616 residues: Dihydroxy-acid dehydratase (616 aa).

D81 provides a ligand contact to Mg(2+). C122 is a [2Fe-2S] cluster binding site. Positions 123 and 124 each coordinate Mg(2+). The residue at position 124 (K124) is an N6-carboxylysine. C195 contributes to the [2Fe-2S] cluster binding site. Residue E491 participates in Mg(2+) binding. S517 acts as the Proton acceptor in catalysis.

It belongs to the IlvD/Edd family. In terms of assembly, homodimer. The cofactor is [2Fe-2S] cluster. Mg(2+) is required as a cofactor.

The catalysed reaction is (2R)-2,3-dihydroxy-3-methylbutanoate = 3-methyl-2-oxobutanoate + H2O. It carries out the reaction (2R,3R)-2,3-dihydroxy-3-methylpentanoate = (S)-3-methyl-2-oxopentanoate + H2O. The protein operates within amino-acid biosynthesis; L-isoleucine biosynthesis; L-isoleucine from 2-oxobutanoate: step 3/4. It participates in amino-acid biosynthesis; L-valine biosynthesis; L-valine from pyruvate: step 3/4. In terms of biological role, functions in the biosynthesis of branched-chain amino acids. Catalyzes the dehydration of (2R,3R)-2,3-dihydroxy-3-methylpentanoate (2,3-dihydroxy-3-methylvalerate) into 2-oxo-3-methylpentanoate (2-oxo-3-methylvalerate) and of (2R)-2,3-dihydroxy-3-methylbutanoate (2,3-dihydroxyisovalerate) into 2-oxo-3-methylbutanoate (2-oxoisovalerate), the penultimate precursor to L-isoleucine and L-valine, respectively. The polypeptide is Dihydroxy-acid dehydratase (Salmonella schwarzengrund (strain CVM19633)).